Here is a 650-residue protein sequence, read N- to C-terminus: Acetyl-coenzyme A synthetase (650 aa).

CoA-binding positions include 191–194 (RGGR), threonine 311, and asparagine 335. ATP contacts are provided by residues 387–389 (GEP), 411–416 (DTWWQT), aspartate 500, and arginine 515. Serine 523 serves as a coordination point for CoA. An ATP-binding site is contributed by arginine 526. Valine 537, histidine 539, and valine 542 together coordinate Mg(2+). Arginine 584 provides a ligand contact to CoA. The residue at position 609 (lysine 609) is an N6-acetyllysine.

It belongs to the ATP-dependent AMP-binding enzyme family. Mg(2+) is required as a cofactor. In terms of processing, acetylated. Deacetylation by the SIR2-homolog deacetylase activates the enzyme.

The catalysed reaction is acetate + ATP + CoA = acetyl-CoA + AMP + diphosphate. In terms of biological role, catalyzes the conversion of acetate into acetyl-CoA (AcCoA), an essential intermediate at the junction of anabolic and catabolic pathways. AcsA undergoes a two-step reaction. In the first half reaction, AcsA combines acetate with ATP to form acetyl-adenylate (AcAMP) intermediate. In the second half reaction, it can then transfer the acetyl group from AcAMP to the sulfhydryl group of CoA, forming the product AcCoA. This chain is Acetyl-coenzyme A synthetase, found in Shewanella frigidimarina (strain NCIMB 400).